A 63-amino-acid chain; its full sequence is uncharacterized protein (63 aa).

Residues 37-57 (IFFPTTFDVLLLAILIFLACA) form a helical membrane-spanning segment.

The protein resides in the cell membrane. This is an uncharacterized protein from Bacillus subtilis (strain 168).